Reading from the N-terminus, the 911-residue chain is Gem-associated protein 4a (911 aa).

As to quaternary structure, component of the core survival motor neuron (SMN) complex composed of Smn, Gem2, Gem3, rig/Gem5 and one of 3 almost identical Gem4 paralogs encoded by Glos/Gem4a, Gem4b or Gem4c. Interacts with Smn; the interaction is probably indirect.

Functionally, component of the survival motor neuron (SMN) complex that catalyzes the assembly of small nuclear ribonucleoproteins (snRNPs), the building blocks of the spliceosome, and thereby plays an important role in the splicing of cellular pre-mRNAs. One of 3 almost identical paralogs (Glos/Gem4a, Gem4b and Gem4c), resulting from a genomic triplication, that have some redundant function. Required for neuromuscular function and organismal viability. The chain is Gem-associated protein 4a from Drosophila melanogaster (Fruit fly).